A 331-amino-acid polypeptide reads, in one-letter code: Tetraacyldisaccharide 4'-kinase (331 aa).

58–65 (TVGGSGKT) contacts ATP.

The protein belongs to the LpxK family.

The enzyme catalyses a lipid A disaccharide + ATP = a lipid IVA + ADP + H(+). The protein operates within glycolipid biosynthesis; lipid IV(A) biosynthesis; lipid IV(A) from (3R)-3-hydroxytetradecanoyl-[acyl-carrier-protein] and UDP-N-acetyl-alpha-D-glucosamine: step 6/6. Functionally, transfers the gamma-phosphate of ATP to the 4'-position of a tetraacyldisaccharide 1-phosphate intermediate (termed DS-1-P) to form tetraacyldisaccharide 1,4'-bis-phosphate (lipid IVA). In Shewanella denitrificans (strain OS217 / ATCC BAA-1090 / DSM 15013), this protein is Tetraacyldisaccharide 4'-kinase.